The chain runs to 813 residues: Polycomb group protein FERTILIZATION-INDEPENDENT SEED 2 (813 aa).

The segment at 1-27 (MARKSIRGKEVVMVSDDDDDDDDVDDD) is disordered. The segment covering 15–26 (SDDDDDDDDVDD) has biased composition (acidic residues). The segment at 134-155 (CPFCLIPCGGHEGLQLHLKSSH) adopts a C2H2-type zinc-finger fold. Disordered stretches follow at residues 197–216 (SPLTFCSKNRNQRRQRDDSN), 232–261 (DLPRGTENDSTHVNDDNVSSPPRAHSSEKI), and 274–648 (ESSE…RKEL). A compositionally biased stretch (basic and acidic residues) spans 232–246 (DLPRGTENDSTHVND). An A-1 repeat occupies 243-264 (HVNDDNVSSPPRAHSSEKISDI). Positions 243–542 (HVNDDNVSSP…HSSKKNKSTR (300 aa)) are 12 X approximate repeat A. Residues 265-281 (LTTTQLAIAESSEPKVP) form a B-1 repeat. The tract at residues 265–640 (LTTTQLAIAE…KAEPSEPKVT (376 aa)) is 7 X approximate repeat B. The stretch at 282–304 (HVNDGNVSSPPRAHSSAEKNEST) is one A-2 repeat. 3 stretches are compositionally biased toward basic and acidic residues: residues 296–307 (SSAEKNESTHVN), 319–331 (HSLEKNESTHVNE), and 344–353 (KKNESTHMND). An A-3 repeat occupies 305 to 327 (HVNDDDDVSSPPRAHSLEKNEST). The A-4 repeat unit spans residues 328-349 (HVNEDNISSPPKAHSSKKNEST). An A-5 repeat occupies 350–371 (HMNDEDVSFPPRTRSSKETSDI). A B-2 repeat occupies 372 to 388 (LTTTQPAIVEPSEPKVR). The span at 388–402 (RRGSRRKQLYAKRYK) shows a compositional bias: basic residues. The stretch at 403 to 419 (ARETQPAIAESSEPKVL) is one B-3 repeat. Basic and acidic residues-rich tracts occupy residues 414-423 (SEPKVLHVND) and 453-462 (SEPKVPHVND). The A-6 repeat unit spans residues 420-441 (HVNDENVSSPPEAHSLEKASDI). Residues 442-458 (LTTTQPAIAESSEPKVP) form a B-4 repeat. One copy of the A-7 repeat lies at 459 to 481 (HVNDENVSSTPRAHSSKKNKSTR). Residues 472 to 481 (HSSKKNKSTR) are compositionally biased toward basic residues. An A-8 repeat occupies 482-502 (KNVDNVPSPPKTRSSKKTSDI). The span at 501 to 512 (DILTTTQPTIAE) shows a compositional bias: polar residues. A B-5 repeat occupies 503 to 519 (LTTTQPTIAESSEPKVR). A compositionally biased stretch (basic and acidic residues) spans 514 to 523 (SEPKVRHVND). Residues 520–542 (HVNDDNVSSTPRAHSSKKNKSTR) form an A-9 repeat. The stretch at 543-563 (KNDDNIPSPPKTRSSKKTSNI) is one A-10 repeat. One copy of the B-6 repeat lies at 564 to 579 (LTRTQPAIAESEPKVP). Basic and acidic residues predominate over residues 574–586 (SEPKVPHVNDDKV). The stretch at 580 to 601 (HVNDDKVSSTPRAHSSKKNKST) is one A-11 repeat. The segment covering 593–602 (HSSKKNKSTH) has biased composition (basic residues). Residues 602–623 (HKKDDNASLPPKTRSSKKTSDI) form an A-12 repeat. Residues 624–640 (LATTQPAKAEPSEPKVT) form a B-7 repeat. The VEFS-box stretch occupies residues 648–783 (LHAERCEAKR…CAKTFHKCTT (136 aa)).

The protein belongs to the VEFS (VRN2-EMF2-FIS2-SU(Z)12) family. Probably indirectly associated with FIE and/or MEA. In plants, PcG complexes are probably composed of a member of the EZ family (CLF or MEA), FIE, and a member of the VEFS family (FIS2, VRN2 or EMF2). In terms of tissue distribution, weakly expressed. Expressed in late siliques.

It is found in the nucleus. In terms of biological role, polycomb group (PcG) protein. PcG proteins act by forming multiprotein complexes, which are required to maintain the transcriptionally repressive state of homeotic genes throughout development. PcG proteins are not required to initiate repression, but to maintain it during later stages of development. They probably act via the methylation of histones, rendering chromatin heritably changed in its expressibility. Required to prevent the proliferation of the central cell by repressing unknown target genes before fertilization. Regulates the anteroposterior organization of the endosperm. The chain is Polycomb group protein FERTILIZATION-INDEPENDENT SEED 2 from Arabidopsis thaliana (Mouse-ear cress).